We begin with the raw amino-acid sequence, 390 residues long: Succinate--CoA ligase [ADP-forming] subunit beta (390 aa).

One can recognise an ATP-grasp domain in the interval lysine 9–lysine 244. 4 residues coordinate ATP: lysine 46, glutamate 99, leucine 102, and glutamate 107. Mg(2+)-binding residues include asparagine 199 and aspartate 213. Substrate is bound by residues asparagine 264 and glycine 321–valine 323.

It belongs to the succinate/malate CoA ligase beta subunit family. As to quaternary structure, heterotetramer of two alpha and two beta subunits. It depends on Mg(2+) as a cofactor.

It catalyses the reaction succinate + ATP + CoA = succinyl-CoA + ADP + phosphate. The catalysed reaction is GTP + succinate + CoA = succinyl-CoA + GDP + phosphate. The protein operates within carbohydrate metabolism; tricarboxylic acid cycle; succinate from succinyl-CoA (ligase route): step 1/1. In terms of biological role, succinyl-CoA synthetase functions in the citric acid cycle (TCA), coupling the hydrolysis of succinyl-CoA to the synthesis of either ATP or GTP and thus represents the only step of substrate-level phosphorylation in the TCA. The beta subunit provides nucleotide specificity of the enzyme and binds the substrate succinate, while the binding sites for coenzyme A and phosphate are found in the alpha subunit. The chain is Succinate--CoA ligase [ADP-forming] subunit beta from Hydrogenovibrio crunogenus (strain DSM 25203 / XCL-2) (Thiomicrospira crunogena).